The following is a 195-amino-acid chain: 3-hydroxyanthranilate 3,4-dioxygenase (195 aa).

Arg50 serves as a coordination point for O2. Residues His54, Glu60, and His102 each coordinate Fe cation. Glu60 is a binding site for substrate. Residues Arg106 and Glu116 each contribute to the substrate site. The a divalent metal cation site is built by Cys131, Cys136, Cys170, and Cys173.

It belongs to the 3-HAO family. Fe(2+) serves as cofactor.

The protein localises to the cytoplasm. It carries out the reaction 3-hydroxyanthranilate + O2 = (2Z,4Z)-2-amino-3-carboxymuconate 6-semialdehyde. It functions in the pathway cofactor biosynthesis; NAD(+) biosynthesis; quinolinate from L-kynurenine: step 3/3. Functionally, catalyzes the oxidative ring opening of 3-hydroxyanthranilate to 2-amino-3-carboxymuconate semialdehyde, which spontaneously cyclizes to quinolinate. This chain is 3-hydroxyanthranilate 3,4-dioxygenase (bna1), found in Aspergillus terreus (strain NIH 2624 / FGSC A1156).